The primary structure comprises 553 residues: Ubiquitin carboxyl-terminal hydrolase 17-like protein 15 (553 aa).

The USP domain maps to 80–375 (AGLQNMGNTC…QAYVLFYIQK (296 aa)). Cys89 (nucleophile) is an active-site residue. The active-site Proton acceptor is the His334. Basic and acidic residues-rich tracts occupy residues 382-392 (SESVSRGREPR) and 398-413 (DTDR…RDHP). 2 disordered regions span residues 382–413 (SESV…RDHP) and 491–524 (STTP…HSKR). Positions 496 to 505 (HQESMNTGTL) are enriched in polar residues. Positions 510–524 (GRARRSKGKNKHSKR) are enriched in basic residues.

The protein belongs to the peptidase C19 family. USP17 subfamily.

It localises to the nucleus. It is found in the endoplasmic reticulum. The enzyme catalyses Thiol-dependent hydrolysis of ester, thioester, amide, peptide and isopeptide bonds formed by the C-terminal Gly of ubiquitin (a 76-residue protein attached to proteins as an intracellular targeting signal).. Its function is as follows. Deubiquitinating enzyme that removes conjugated ubiquitin from specific proteins to regulate different cellular processes that may include cell proliferation, progression through the cell cycle, apoptosis, cell migration, and the cellular response to viral infection. The polypeptide is Ubiquitin carboxyl-terminal hydrolase 17-like protein 15 (USP17L15) (Homo sapiens (Human)).